Consider the following 259-residue polypeptide: Phosphatidylglycerol--prolipoprotein diacylglyceryl transferase (259 aa).

Transmembrane regions (helical) follow at residues Leu16–Ala36, Phe55–Tyr75, Glu92–Cys112, and Ile117–Gly137. Position 138 (Arg138) interacts with a 1,2-diacyl-sn-glycero-3-phospho-(1'-sn-glycerol). 3 consecutive transmembrane segments (helical) span residues Gln172–Phe192, Gly201–Phe221, and Ile228–Leu248.

It belongs to the Lgt family.

It is found in the cell inner membrane. The catalysed reaction is L-cysteinyl-[prolipoprotein] + a 1,2-diacyl-sn-glycero-3-phospho-(1'-sn-glycerol) = an S-1,2-diacyl-sn-glyceryl-L-cysteinyl-[prolipoprotein] + sn-glycerol 1-phosphate + H(+). It participates in protein modification; lipoprotein biosynthesis (diacylglyceryl transfer). Catalyzes the transfer of the diacylglyceryl group from phosphatidylglycerol to the sulfhydryl group of the N-terminal cysteine of a prolipoprotein, the first step in the formation of mature lipoproteins. The polypeptide is Phosphatidylglycerol--prolipoprotein diacylglyceryl transferase (Rickettsia rickettsii (strain Iowa)).